Consider the following 315-residue polypeptide: MSLLHFATRRLILQVLRELGLKAPPVHKTLKICIAMSRPSSNMADFRRFFARAKHIAIITGAGVSAESGVPTFRGPGGFWRKWKAEDLATPEAFAQNPSLVWEFYHYRREVILKKHPNAAHVAIAACEERLSLQGRRVVVITQNIDEFHTKAGTKNILELHGSLFKTRCCSCGNVRVNYNNPICPALEGKGLPDPNAPDAQIPLENLPRWKTTGDFSVLFLLDASPLYPSNLSCSHPVGAPALSEVADLGRWVGTSSLVYPAGMFGPHVALRGIPVAEFNTVTTPVTQNFRFHFSGLCGTTIPEALSPHESEKTG.

A mitochondrion-targeting transit peptide spans 1-39 (MSLLHFATRRLILQVLRELGLKAPPVHKTLKICIAMSRP). In terms of domain architecture, Deacetylase sirtuin-type spans 40 to 312 (SSNMADFRRF…PEALSPHESE (273 aa)). Residue 61–80 (GAGVSAESGVPTFRGPGGFW) coordinates NAD(+). 2 residues coordinate substrate: tyrosine 105 and arginine 108. 143–146 (QNID) provides a ligand contact to NAD(+). The Proton acceptor role is filled by histidine 161. Residues 254–256 (GTS), 280–282 (NTV), and cysteine 298 each bind NAD(+).

Belongs to the sirtuin family. Class III subfamily. Monomer. Homodimer. Interacts with CPS1.

The protein localises to the mitochondrion. The protein resides in the cytoplasm. It localises to the cytosol. It is found in the nucleus. It carries out the reaction N(6)-malonyl-L-lysyl-[protein] + NAD(+) + H2O = 2''-O-malonyl-ADP-D-ribose + nicotinamide + L-lysyl-[protein]. The catalysed reaction is N(6)-succinyl-L-lysyl-[protein] + NAD(+) + H2O = 2''-O-succinyl-ADP-D-ribose + nicotinamide + L-lysyl-[protein]. The enzyme catalyses N(6)-glutaryl-L-lysyl-[protein] + NAD(+) + H2O = 2''-O-glutaryl-ADP-D-ribose + nicotinamide + L-lysyl-[protein]. NAD-dependent lysine demalonylase, desuccinylase and deglutarylase that specifically removes malonyl, succinyl and glutaryl groups on target proteins. Activates CPS1 and contributes to the regulation of blood ammonia levels during prolonged fasting: acts by mediating desuccinylation and deglutarylation of CPS1, thereby increasing CPS1 activity in response to elevated NAD levels during fasting. Activates SOD1 by mediating its desuccinylation, leading to reduced reactive oxygen species. Activates SHMT2 by mediating its desuccinylation. Modulates ketogenesis through the desuccinylation and activation of HMGCS2. Has weak NAD-dependent protein deacetylase activity; however this activity may not be physiologically relevant in vivo. Can deacetylate cytochrome c (CYCS) and a number of other proteins in vitro such as UOX. This chain is NAD-dependent protein deacylase sirtuin-5, mitochondrial, found in Monodelphis domestica (Gray short-tailed opossum).